Reading from the N-terminus, the 316-residue chain is Pantothenate kinase (316 aa).

95–102 lines the ATP pocket; sequence GSVAVGKS.

This sequence belongs to the prokaryotic pantothenate kinase family.

It localises to the cytoplasm. The catalysed reaction is (R)-pantothenate + ATP = (R)-4'-phosphopantothenate + ADP + H(+). The protein operates within cofactor biosynthesis; coenzyme A biosynthesis; CoA from (R)-pantothenate: step 1/5. The protein is Pantothenate kinase of Shewanella halifaxensis (strain HAW-EB4).